A 233-amino-acid polypeptide reads, in one-letter code: Small ribosomal subunit protein uS3 (233 aa).

In terms of domain architecture, KH type-2 spans 39 to 107 (VRQFLASELT…PSQINIAEVR (69 aa)).

It belongs to the universal ribosomal protein uS3 family. As to quaternary structure, part of the 30S ribosomal subunit. Forms a tight complex with proteins S10 and S14.

Functionally, binds the lower part of the 30S subunit head. Binds mRNA in the 70S ribosome, positioning it for translation. This is Small ribosomal subunit protein uS3 from Baumannia cicadellinicola subsp. Homalodisca coagulata.